We begin with the raw amino-acid sequence, 240 residues long: U1 small nuclear ribonucleoprotein C (240 aa).

The Matrin-type zinc-finger motif lies at 4–36; it reads YYCEYCDIYLTHSSPVGRRQHIQGRKHISAKIE. Disordered regions lie at residues 86 to 122 and 175 to 240; these read GMKH…SKYH and IDSD…SVDA. Composition is skewed to basic and acidic residues over residues 178–194 and 203–219; these read DPVK…DNAI and DQGD…HADH. Positions 226 to 240 are enriched in polar residues; that stretch reads TDGTANGNDQVSVDA.

Belongs to the U1 small nuclear ribonucleoprotein C family. In terms of assembly, U1 snRNP is composed of the 7 core Sm proteins B/B', D1, D2, D3, E, F and G that assemble in a heptameric protein ring on the Sm site of the small nuclear RNA to form the core snRNP, and at least 3 U1 snRNP-specific proteins U1-70K, U1-A and U1-C. U1-C interacts with U1 snRNA and the 5' splice-site region of the pre-mRNA.

The protein resides in the nucleus. Its function is as follows. Component of the spliceosomal U1 snRNP, which is essential for recognition of the pre-mRNA 5' splice-site and the subsequent assembly of the spliceosome. U1-C is directly involved in initial 5' splice-site recognition for both constitutive and regulated alternative splicing. The interaction with the 5' splice-site seems to precede base-pairing between the pre-mRNA and the U1 snRNA. Stimulates commitment or early (E) complex formation by stabilizing the base pairing of the 5' end of the U1 snRNA and the 5' splice-site region. The chain is U1 small nuclear ribonucleoprotein C from Plasmodium vivax (strain Salvador I).